The sequence spans 575 residues: Isocitrate dehydrogenase kinase/phosphatase (575 aa).

ATP contacts are provided by residues 315 to 321 (APGVKGM) and Lys336. Asp371 is an active-site residue.

The protein belongs to the AceK family.

It is found in the cytoplasm. The catalysed reaction is L-seryl-[isocitrate dehydrogenase] + ATP = O-phospho-L-seryl-[isocitrate dehydrogenase] + ADP + H(+). In terms of biological role, bifunctional enzyme which can phosphorylate or dephosphorylate isocitrate dehydrogenase (IDH) on a specific serine residue. This is a regulatory mechanism which enables bacteria to bypass the Krebs cycle via the glyoxylate shunt in response to the source of carbon. When bacteria are grown on glucose, IDH is fully active and unphosphorylated, but when grown on acetate or ethanol, the activity of IDH declines drastically concomitant with its phosphorylation. The sequence is that of Isocitrate dehydrogenase kinase/phosphatase from Yersinia pseudotuberculosis serotype O:1b (strain IP 31758).